The primary structure comprises 880 residues: Translation initiation factor IF-2 (880 aa).

The tract at residues 1-251 (MVDTKNPGDK…PTAKPAPAKQ (251 aa)) is disordered. Low complexity predominate over residues 58–79 (PADAPAAPAPVAAAKPAPVRAP). The span at 115–183 (ARIRDEEERK…KRFGEEEAKK (69 aa)) shows a compositional bias: basic and acidic residues. Low complexity-rich tracts occupy residues 184–215 (AAAA…VAAD) and 233–250 (AARP…APAK). The tr-type G domain occupies 376–547 (PRSPVVTVMG…ALQAELLDLK (172 aa)). The segment at 385 to 392 (GHVDHGKT) is G1. 385–392 (GHVDHGKT) contacts GTP. The G2 stretch occupies residues 410-414 (GITQH). A G3 region spans residues 433-436 (DTPG). GTP is bound by residues 433 to 437 (DTPGH) and 487 to 490 (NKID). Positions 487–490 (NKID) are G4. The segment at 523–525 (SAK) is G5.

Belongs to the TRAFAC class translation factor GTPase superfamily. Classic translation factor GTPase family. IF-2 subfamily.

The protein localises to the cytoplasm. In terms of biological role, one of the essential components for the initiation of protein synthesis. Protects formylmethionyl-tRNA from spontaneous hydrolysis and promotes its binding to the 30S ribosomal subunits. Also involved in the hydrolysis of GTP during the formation of the 70S ribosomal complex. This chain is Translation initiation factor IF-2, found in Rhodopseudomonas palustris (strain BisB18).